The chain runs to 747 residues: Protein Niban 2 (747 aa).

A lipid anchor (N-myristoyl glycine) is attached at Gly2. A PH domain is found at 68 to 192; that stretch reads RIIFSGNLFQ…WQAVLQDCVR (125 aa). Ser568 and Ser574 each carry phosphoserine. Positions 589–747 are disordered; the sequence is WGEQYGDGGD…EDSAGVQTEF (159 aa). The span at 593–602 shows a compositional bias: gly residues; it reads YGDGGDGSDS. Residues Ser605, Ser626, Ser641, Ser645, Ser648, Ser667, Ser672, Ser683, Ser693, and Ser697 each carry the phosphoserine modification. Positions 708 to 722 are enriched in basic and acidic residues; that stretch reads VDLEPPKPSDQETGE. The span at 734-747 shows a compositional bias: polar residues; that stretch reads HTTTEDSAGVQTEF.

The protein belongs to the Niban family. Post-translationally, as apoptosis proceeds, degraded via an proteasome-independent pathway, probably by caspases.

Its subcellular location is the cytoplasm. It is found in the cytosol. The protein localises to the cell junction. The protein resides in the adherens junction. It localises to the membrane. May play a role in apoptosis suppression. In Rattus norvegicus (Rat), this protein is Protein Niban 2.